A 92-amino-acid polypeptide reads, in one-letter code: DNA-binding protein HU (92 aa).

Belongs to the bacterial histone-like protein family. In terms of assembly, homodimer.

Its function is as follows. Histone-like DNA-binding protein which is capable of wrapping DNA to stabilize it, and thus to prevent its denaturation under extreme environmental conditions. This Buchnera aphidicola subsp. Acyrthosiphon pisum (strain APS) (Acyrthosiphon pisum symbiotic bacterium) protein is DNA-binding protein HU (hup).